We begin with the raw amino-acid sequence, 372 residues long: Phospho-N-acetylmuramoyl-pentapeptide-transferase (372 aa).

Helical transmembrane passes span 2–22 (LVWL…VSSL), 71–91 (TPTM…LLWA), 98–118 (VWIL…DDWL), 134–154 (YFWL…IATL), 176–196 (MIPF…YFVI), 211–231 (GLAI…AYVS), 251–271 (VIIV…FNAH), 275–295 (VFMG…IAVM), 300–320 (IAFA…MLQV), and 349–369 (QVVA…LMTL).

This sequence belongs to the glycosyltransferase 4 family. MraY subfamily. The cofactor is Mg(2+).

The protein localises to the cell inner membrane. It carries out the reaction UDP-N-acetyl-alpha-D-muramoyl-L-alanyl-gamma-D-glutamyl-meso-2,6-diaminopimeloyl-D-alanyl-D-alanine + di-trans,octa-cis-undecaprenyl phosphate = di-trans,octa-cis-undecaprenyl diphospho-N-acetyl-alpha-D-muramoyl-L-alanyl-D-glutamyl-meso-2,6-diaminopimeloyl-D-alanyl-D-alanine + UMP. The protein operates within cell wall biogenesis; peptidoglycan biosynthesis. Its function is as follows. Catalyzes the initial step of the lipid cycle reactions in the biosynthesis of the cell wall peptidoglycan: transfers peptidoglycan precursor phospho-MurNAc-pentapeptide from UDP-MurNAc-pentapeptide onto the lipid carrier undecaprenyl phosphate, yielding undecaprenyl-pyrophosphoryl-MurNAc-pentapeptide, known as lipid I. The protein is Phospho-N-acetylmuramoyl-pentapeptide-transferase of Psychrobacter cryohalolentis (strain ATCC BAA-1226 / DSM 17306 / VKM B-2378 / K5).